Consider the following 165-residue polypeptide: Ribosome maturation factor RimM (165 aa).

The 72-residue stretch at 92 to 163 folds into the PRC barrel domain; sequence EARHYWADLE…RVVVDPPEGL (72 aa).

This sequence belongs to the RimM family. As to quaternary structure, binds ribosomal protein uS19.

Its subcellular location is the cytoplasm. In terms of biological role, an accessory protein needed during the final step in the assembly of 30S ribosomal subunit, possibly for assembly of the head region. Essential for efficient processing of 16S rRNA. May be needed both before and after RbfA during the maturation of 16S rRNA. It has affinity for free ribosomal 30S subunits but not for 70S ribosomes. The sequence is that of Ribosome maturation factor RimM from Anaeromyxobacter sp. (strain Fw109-5).